The sequence spans 367 residues: Pre-small/secreted glycoprotein (367 aa).

Residues 1 to 33 (MGSGYQLLQLPRERFRKTSFLVWVIILFQRAIS) form the signal peptide. N-linked (GlcNAc...) asparagine; by host glycosylation is present at Asn41. 2 disulfides stabilise this stretch: Cys109–Cys136 and Cys122–Cys148. Residues Asn205, Asn239, Asn258, and Asn269 are each glycosylated (N-linked (GlcNAc...) asparagine; by host).

It belongs to the filoviruses glycoprotein family. Homodimer; disulfide-linked. The homodimers are linked by two disulfide bonds in a parallel orientation. In terms of assembly, monomer. Post-translationally, this precursor is processed into mature sGP and delta-peptide by host furin or furin-like proteases. The cleavage site corresponds to the furin optimal cleavage sequence [KR]-X-[KR]-R. N-glycosylated. In terms of processing, O-glycosylated.

Its subcellular location is the secreted. Seems to possess an anti-inflammatory activity as it can reverse the barrier-decreasing effects of TNF alpha. Might therefore contribute to the lack of inflammatory reaction seen during infection in spite the of extensive necrosis and massive virus production. Does not seem to be involved in activation of primary macrophages. Does not seem to interact specifically with neutrophils. In terms of biological role, viroporin that permeabilizes mammalian cell plasma membranes. It acts by altering permeation of ionic compounds and small molecules. This activity may lead to viral enterotoxic activity. This Reston ebolavirus (strain Philippines-96) (REBOV) protein is Pre-small/secreted glycoprotein (GP).